The chain runs to 454 residues: Gastrin/cholecystokinin type B receptor (454 aa).

The Extracellular segment spans residues 1–57 (MELLKPNRSVLGSGPGPGASLCRSGGPLLNGSGTGNLSCEPPRIRGAGTRELELAIR). Residues N7, N30, and N36 are each glycosylated (N-linked (GlcNAc...) asparagine). The chain crosses the membrane as a helical span at residues 58-79 (VTLYAVIFLMSVGGNVLIIVVL). Residues 80–87 (GLSRRLRT) are Cytoplasmic-facing. The helical transmembrane segment at 88–109 (VTNAFLLSLAVSDLLLAVACMP) threads the bilayer. Residues 110 to 131 (FTLLPNLMGTFIFGTVVCKAVS) are Extracellular-facing. A disulfide bridge connects residues C127 and C205. A helical transmembrane segment spans residues 132 to 150 (YFMGVSVSVSTLSLVAIAL). The Cytoplasmic portion of the chain corresponds to 151-170 (ERYSAICRPLQARVWQTRSH). The helical transmembrane segment at 171–189 (AARVIVATWMLSGLLMVPY) threads the bilayer. Over 190–219 (PVYTAVQPAGPRVLQCMHRWPSARVRQTWS) the chain is Extracellular. A helical transmembrane segment spans residues 220–242 (VLLLLLLFFVPGVVMAVAYGLIS). Residues 243-340 (RELYLGLRFD…KLLAKKRVVR (98 aa)) are Cytoplasmic-facing. Residues 257–284 (SESQSRVGSQGGLPGGTGQGPAQANGRC) are disordered. A compositionally biased stretch (gly residues) spans 265–275 (SQGGLPGGTGQ). The helical transmembrane segment at 341–362 (MLLVIVVLFFLCWLPVYSANTW) threads the bilayer. Over 363-380 (RAFDGPGAHRALSGAPIS) the chain is Extracellular. The helical transmembrane segment at 381–401 (FIHLLTYASACVNPLVYCFMH) threads the bilayer. Topologically, residues 402-454 (RRFRQACLDTCTRCCPRPPRARPRPLPDEDPPTPSIASLSRLSYTTISTLGPG) are cytoplasmic. C415 carries the S-palmitoyl cysteine lipid modification. Residues 422–441 (ARPRPLPDEDPPTPSIASLS) are disordered.

Belongs to the G-protein coupled receptor 1 family.

The protein resides in the cell membrane. Its function is as follows. Receptor for gastrin and cholecystokinin. The CCK-B receptors occur throughout the central nervous system where they modulate anxiety, analgesia, arousal, and neuroleptic activity. This receptor mediates its action by association with G proteins that activate a phosphatidylinositol-calcium second messenger system. This chain is Gastrin/cholecystokinin type B receptor (CCKBR), found in Bos taurus (Bovine).